The chain runs to 306 residues: Probable cobalamin biosynthesis protein CobD (306 aa).

6 helical membrane-spanning segments follow: residues 17–37, 54–74, 88–108, 155–175, 207–227, and 286–306; these read IGEPPEKVHPVIFIGKLIIFF, LFGFFNVILVLAIVFFMAYEI, ISLYSIILSFSIGHKSLIEFS, ITDSIIAPLIYVAIFGLPGAF, ILNFIPSRIAGMLLIITAPFY, and SLKAVDYSVLLFLIIYTVLLM.

Belongs to the CobD/CbiB family.

It is found in the cell membrane. Its pathway is cofactor biosynthesis; adenosylcobalamin biosynthesis. In terms of biological role, converts cobyric acid to cobinamide by the addition of aminopropanol on the F carboxylic group. The protein is Probable cobalamin biosynthesis protein CobD of Methanococcus maripaludis (strain C5 / ATCC BAA-1333).